The primary structure comprises 122 residues: Large ribosomal subunit protein uL14 (122 aa).

This sequence belongs to the universal ribosomal protein uL14 family. In terms of assembly, part of the 50S ribosomal subunit. Forms a cluster with proteins L3 and L19. In the 70S ribosome, L14 and L19 interact and together make contacts with the 16S rRNA in bridges B5 and B8.

Its function is as follows. Binds to 23S rRNA. Forms part of two intersubunit bridges in the 70S ribosome. The protein is Large ribosomal subunit protein uL14 of Kineococcus radiotolerans (strain ATCC BAA-149 / DSM 14245 / SRS30216).